We begin with the raw amino-acid sequence, 754 residues long: Fibronectin type III domain-containing protein 1 (754 aa).

A signal peptide spans 1–19; that stretch reads MKSWISISFLCMLFPLSNG. 3 disordered regions span residues 40–61, 85–106, and 130–163; these read SLQGTAPTSQYPQGGTQISQGG, AQISQGGGQGISQGATQGTQFS, and AQHSQAGAQGSQFPQSAAHTAQHHQGTAQPAQSG. The segment covering 130–161 has biased composition (low complexity); sequence AQHSQAGAQGSQFPQSAAHTAQHHQGTAQPAQ. Fibronectin type-III domains are found at residues 250-355, 359-449, 453-545, 549-642, and 645-742; these read PPQS…TPDL, APLN…TDKF, APRN…TKMD, EPMS…LPKP, and LVPN…SFPG. The segment at 731–754 is disordered; sequence SNLSSQQFSFPGQQVGQQQSNPWI.

Prismatic layer of shell (at protein level). Expressed primarily in the mantle with highest level in the outer epithelium of the mantle edge and lower level in the mantle pallium.

It localises to the secreted. The sequence is that of Fibronectin type III domain-containing protein 1 from Margaritifera margaritifera (Freshwater pearl mussel).